We begin with the raw amino-acid sequence, 186 residues long: Biphenyl dioxygenase subunit beta (186 aa).

It belongs to the bacterial ring-hydroxylating dioxygenase beta subunit family. Heterohexamer consisting of 3 BphA subunits and 3 BphE subunits. A ferredoxin (BphF) and a ferredoxin reductase (BphG) must be present to obtain activity.

It catalyses the reaction biphenyl + NADH + O2 + H(+) = (2R,3S)-3-phenylcyclohexa-3,5-diene-1,2-diol + NAD(+). Its pathway is xenobiotic degradation; biphenyl degradation; 2-hydroxy-2,4-pentadienoate and benzoate from biphenyl: step 1/4. Functionally, the beta subunit may be responsible for the substrate specificity of the enzyme. The sequence is that of Biphenyl dioxygenase subunit beta (bphE) from Comamonas testosteroni (Pseudomonas testosteroni).